The chain runs to 91 residues: Early E3B 10.4 kDa protein (91 aa).

A signal peptide spans 1-22 (MIPRNFFFTILICPFNVCATFT). The Lumenal segment spans residues 23 to 34 (AVATASPDCIGP). The helical transmembrane segment at 35-60 (FASYALFAFVTCICVCSIVCLVINFF) threads the bilayer. The Cytoplasmic portion of the chain corresponds to 61–91 (QLVDWIFVRIAYLRHHPEYRNQNVAALLRLI).

Belongs to the adenoviridae E3B family.

It is found in the host endoplasmic reticulum membrane. In terms of biological role, down-regulates the EGF receptor. This chain is Early E3B 10.4 kDa protein, found in Human adenovirus B serotype 3 (HAdV-3).